Consider the following 274-residue polypeptide: Cytochrome b-c1 complex subunit Rieske, mitochondrial (274 aa).

At 79-103 the chain is on the mitochondrial matrix side; the sequence is SHTDIKVPDFSDYRRSEVLDKTKSS. The chain crosses the membrane as a helical span at residues 104–140; that stretch reads RESSDARKGFSYLVTAATAVGVTYAAKSIVTQFVSSM. Over 141-274 the chain is Mitochondrial intermembrane; that stretch reads SASADVLAMS…FTGDDMVIVG (134 aa). The Rieske domain maps to 187 to 272; the sequence is EAAVELSQLR…YEFTGDDMVI (86 aa). Residues Cys217, His219, Cys236, His239, and Ser241 each contribute to the [2Fe-2S] cluster site. The cysteines at positions 222 and 238 are disulfide-linked.

The protein belongs to the Rieske iron-sulfur protein family. Component of the ubiquinol-cytochrome c oxidoreductase (cytochrome b-c1 complex, complex III, CIII), a multisubunit enzyme composed of 11 subunits. The complex is composed of 3 respiratory subunits cytochrome b, cytochrome c1 and Rieske protein UQCRFS1, 2 core protein subunits UQCRC1/QCR1 and UQCRC2/QCR2, and 6 low-molecular weight protein subunits UQCRH/QCR6, UQCRB/QCR7, UQCRQ/QCR8, UQCR10/QCR9, UQCR11/QCR10 and subunit 9, the cleavage product of Rieske protein UQCRFS1. The complex exists as an obligatory dimer and forms supercomplexes (SCs) in the inner mitochondrial membrane with NADH-ubiquinone oxidoreductase (complex I, CI) and cytochrome c oxidase (complex IV, CIV), resulting in different assemblies (supercomplex SCI(1)III(2)IV(1) and megacomplex MCI(2)III(2)IV(2)). Incorporation of the Rieske protein UQCRFS1 is the penultimate step in complex III assembly. Interacts with TTC19, which is involved in the clearance of UQCRFS1 fragments. In terms of assembly, component of the ubiquinol-cytochrome c oxidoreductase (cytochrome b-c1 complex, complex III, CIII). Subunit 9 corresponds to the mitochondrial targeting sequence (MTS) of Rieske protein UQCRFS1. It is retained after processing and incorporated inside complex III, where it remains bound to the complex and localizes between the 2 core subunits UQCRC1/QCR1 and UQCRC2/QCR2. [2Fe-2S] cluster is required as a cofactor. Post-translationally, proteolytic processing is necessary for the correct insertion of UQCRFS1 in the complex III dimer. Several fragments are generated during UQCRFS1 insertion, most probably due to the endogenous matrix-processing peptidase (MPP) activity of the 2 core protein subunits UQCRC1/QCR1 and UQCRC2/QCR2, which are homologous to the 2 mitochondrial-processing peptidase (MPP) subunits beta-MPP and alpha-MPP respectively. The action of the protease is also necessary for the clearance of the UQCRFS1 fragments.

The protein resides in the mitochondrion inner membrane. It carries out the reaction a quinol + 2 Fe(III)-[cytochrome c](out) = a quinone + 2 Fe(II)-[cytochrome c](out) + 2 H(+)(out). Component of the ubiquinol-cytochrome c oxidoreductase, a multisubunit transmembrane complex that is part of the mitochondrial electron transport chain which drives oxidative phosphorylation. The respiratory chain contains 3 multisubunit complexes succinate dehydrogenase (complex II, CII), ubiquinol-cytochrome c oxidoreductase (cytochrome b-c1 complex, complex III, CIII) and cytochrome c oxidase (complex IV, CIV), that cooperate to transfer electrons derived from NADH and succinate to molecular oxygen, creating an electrochemical gradient over the inner membrane that drives transmembrane transport and the ATP synthase. The cytochrome b-c1 complex catalyzes electron transfer from ubiquinol to cytochrome c, linking this redox reaction to translocation of protons across the mitochondrial inner membrane, with protons being carried across the membrane as hydrogens on the quinol. In the process called Q cycle, 2 protons are consumed from the matrix, 4 protons are released into the intermembrane space and 2 electrons are passed to cytochrome c. The Rieske protein is a catalytic core subunit containing a [2Fe-2S] iron-sulfur cluster. It cycles between 2 conformational states during catalysis to transfer electrons from the quinol bound in the Q(0) site in cytochrome b to cytochrome c1. Incorporation of UQCRFS1 is the penultimate step in complex III assembly. In terms of biological role, component of the ubiquinol-cytochrome c oxidoreductase (cytochrome b-c1 complex, complex III, CIII). UQCRFS1 undergoes proteolytic processing once it is incorporated in the complex III dimer. One of the fragments, called subunit 9, corresponds to its mitochondrial targeting sequence (MTS). The proteolytic processing is necessary for the correct insertion of UQCRFS1 in the complex III dimer, but the persistence of UQCRFS1-derived fragments may prevent newly imported UQCRFS1 to be processed and assembled into complex III and is detrimental for the complex III structure and function. In Lagothrix lagotricha (Brown woolly monkey), this protein is Cytochrome b-c1 complex subunit Rieske, mitochondrial (UQCRFS1).